The primary structure comprises 401 residues: Phosphoglycerate kinase, cytosolic (401 aa).

(2R)-3-phosphoglycerate is bound by residues alanine 24, aspartate 25, asparagine 27, arginine 41, serine 63, histidine 64, glycine 66, arginine 67, arginine 122, histidine 154, and arginine 155. Glycine 200 lines the ADP pocket. Glycine 200 is a binding site for CDP. Residues lysine 202 and lysine 206 each coordinate AMP. Lysine 206 is a binding site for ATP. Residue glycine 224 coordinates ADP. A CDP-binding site is contributed by glycine 224. AMP-binding residues include glycine 225 and glycine 297. Residues glycine 225 and glycine 297 each coordinate ATP. Glycine 322 and phenylalanine 327 together coordinate CDP. Position 327 (phenylalanine 327) interacts with ADP. Glutamate 328 contributes to the AMP binding site. Residues glutamate 328, aspartate 359, and serine 360 each contribute to the ATP site. A Mg(2+)-binding site is contributed by aspartate 359.

Belongs to the phosphoglycerate kinase family. As to quaternary structure, monomer. It depends on Mg(2+) as a cofactor.

The protein resides in the cytoplasm. It carries out the reaction (2R)-3-phosphoglycerate + ATP = (2R)-3-phospho-glyceroyl phosphate + ADP. It participates in carbohydrate degradation; glycolysis; pyruvate from D-glyceraldehyde 3-phosphate: step 2/5. The protein is Phosphoglycerate kinase, cytosolic of Triticum aestivum (Wheat).